Consider the following 399-residue polypeptide: Elongation factor Tu (399 aa).

Positions 10-204 (KPHVNIGTIG…AVDASIPEPE (195 aa)) constitute a tr-type G domain. Residues 19–26 (GHVDHGKT) form a G1 region. A GTP-binding site is contributed by 19-26 (GHVDHGKT). Mg(2+) is bound at residue Thr-26. Positions 60–64 (GITIN) are G2. The segment at 81-84 (DCPG) is G3. GTP-binding positions include 81-85 (DCPGH) and 136-139 (NKCD). Residues 136–139 (NKCD) form a G4 region. Residues 174-176 (SGL) form a G5 region.

It belongs to the TRAFAC class translation factor GTPase superfamily. Classic translation factor GTPase family. EF-Tu/EF-1A subfamily. As to quaternary structure, monomer.

Its subcellular location is the cytoplasm. It catalyses the reaction GTP + H2O = GDP + phosphate + H(+). GTP hydrolase that promotes the GTP-dependent binding of aminoacyl-tRNA to the A-site of ribosomes during protein biosynthesis. In Prochlorococcus marinus (strain SARG / CCMP1375 / SS120), this protein is Elongation factor Tu.